The following is a 2061-amino-acid chain: Putative PWWP domain-containing DNA repair factor 4 (2061 aa).

Disordered stretches follow at residues 101 to 211 (TNLG…SRAR), 382 to 408 (ALGRDRSRARSAIASTPGTLQGNRSSV), 541 to 586 (TPGT…GDGS), 668 to 694 (PATLRGEKSRAHTSLAPAPGALRGDGS), 864 to 910 (PTPG…SERS), 1046 to 1072 (PGTMRGDSSTARTATAPSPGALRGDRS), 1159 to 1182 (ALHGDSSQAHTAIAPTPGTMRGDS), 1205 to 1383 (KAIA…RDDK), 1521 to 1548 (PGALHSDRSQTHTAIDPTPSVLRSDSSP), and 1602 to 1726 (KKGK…KLAN). 2 stretches are compositionally biased toward basic and acidic residues: residues 133–153 (PREDDWRCKGDLRRSLGKREN) and 162–173 (ESKRALRDDRSQ). Residues 397–408 (TPGTLQGNRSSV) are compositionally biased toward polar residues. Residues 1051–1061 (GDSSTARTATA) show a composition bias toward polar residues. The span at 1364–1373 (DSSQVHTTIA) shows a compositional bias: polar residues. The segment covering 1639 to 1648 (LKEETQDSRP) has biased composition (basic and acidic residues). Positions 1656 to 1665 (PESSPFSGNI) are enriched in polar residues. One can recognise a PWWP domain in the interval 1756-1817 (RGTMVWFKFQ…KHLDCKEKEK (62 aa)).

It belongs to the PWWP3A family.

This chain is Putative PWWP domain-containing DNA repair factor 4, found in Homo sapiens (Human).